Reading from the N-terminus, the 270-residue chain is Phosphonates import ATP-binding protein PhnC 2 (270 aa).

In terms of domain architecture, ABC transporter spans 2–245 (LVVEGLTCRF…IARELYDLEA (244 aa)). Residue 34 to 41 (GRSGAGKS) coordinates ATP.

Belongs to the ABC transporter superfamily. Phosphonates importer (TC 3.A.1.9.1) family. The complex is composed of two ATP-binding proteins (PhnC), two transmembrane proteins (PhnE) and a solute-binding protein (PhnD).

It is found in the cell inner membrane. It catalyses the reaction phosphonate(out) + ATP + H2O = phosphonate(in) + ADP + phosphate + H(+). Its function is as follows. Part of the ABC transporter complex PhnCDE involved in phosphonates import. Responsible for energy coupling to the transport system. The protein is Phosphonates import ATP-binding protein PhnC 2 of Rhodopseudomonas palustris (strain BisA53).